We begin with the raw amino-acid sequence, 1182 residues long: IQ motif and SEC7 domain-containing protein 3 (1182 aa).

Residues 20–56 are a coiled coil; the sequence is AIVQNQQSLIHTQRERIDELERRLDELSAENRSLWEH. Disordered regions lie at residues 62 to 157 and 230 to 275; these read AQPP…ERPP and AAGR…RQQP. Over residues 63 to 78 the composition is skewed to pro residues; that stretch reads QPPPGLVPPSSAPLPA. Low complexity-rich tracts occupy residues 79 to 105 and 254 to 263; these read APAT…AAAP and GAGAASPRAG. Phosphoserine is present on serine 259. The region spanning 315 to 344 is the IQ domain; the sequence is SRRAACTIQTAFRQYQLSKNFEKIRNSLLE. Disordered stretches follow at residues 444 to 479 and 521 to 616; these read AGPP…AHSG and EPAA…ASAS. The span at 533 to 548 shows a compositional bias: basic and acidic residues; it reads SGREAPEAPAVGREDA. Over residues 555-569 the composition is skewed to low complexity; that stretch reads AEAAASGAADGATAP. Over residues 572-581 the composition is skewed to acidic residues; the sequence is EEEEEEEETA. Low complexity predominate over residues 598-616; it reads SSSSTSTKSAKSGSEASAS. The region spanning 644-837 is the SEC7 domain; sequence TLSTDTLRKR…VGIYERIQQK (194 aa). The PH domain occupies 850–983; that stretch reads TKVEKSIVGM…LKESIAEVTE (134 aa). A coiled-coil region spans residues 964–992; the sequence is SDEMQKFVEDLKESIAEVTELEQIRIEWE. Disordered regions lie at residues 1002–1090 and 1121–1182; these read LSFK…PGTL and YTSS…RSLV. Residues 1022 to 1033 are compositionally biased toward basic and acidic residues; sequence AKREAALRERPA. The span at 1043-1052 shows a compositional bias: polar residues; it reads NRLQTSQHNS. Pro residues predominate over residues 1061–1087; sequence PVPPPDLQPSPPRQQTPPLPPPPPTPP. Residues 1121 to 1132 are compositionally biased toward low complexity; it reads YTSSSSDSCGST. The segment covering 1147 to 1157 has biased composition (pro residues); it reads PPLPPPPPPYN.

The protein belongs to the BRAG family. Interacts with DLG1 and DLG4. Interacts with GPHN. In terms of tissue distribution, expressed specifically in the adult brain, predominantly in the cerebral cortex and the olfactory bulb, but not in the fetal brain. Expressed only in mature neurons, but not in undifferentiated neural stem precursor cells (NSPCs), nor in glioma cells.

It is found in the cytoplasm. Its subcellular location is the postsynaptic density. Its function is as follows. Acts as a guanine nucleotide exchange factor (GEF) for ARF1. The sequence is that of IQ motif and SEC7 domain-containing protein 3 (IQSEC3) from Homo sapiens (Human).